Here is a 401-residue protein sequence, read N- to C-terminus: Tyrosine--tRNA ligase (401 aa).

A 'HIGH' region motif is present at residues 45-54; the sequence is PTAPDLHLGH. The 'KMSKS' region motif lies at 230-234; the sequence is KMSKS. ATP is bound at residue K233. Residues 339–399 enclose the S4 RNA-binding domain; that stretch reads IWLAKALVEC…GKRKFAKLKV (61 aa).

The protein belongs to the class-I aminoacyl-tRNA synthetase family. TyrS type 2 subfamily. Homodimer.

It is found in the cytoplasm. The catalysed reaction is tRNA(Tyr) + L-tyrosine + ATP = L-tyrosyl-tRNA(Tyr) + AMP + diphosphate + H(+). Functionally, catalyzes the attachment of tyrosine to tRNA(Tyr) in a two-step reaction: tyrosine is first activated by ATP to form Tyr-AMP and then transferred to the acceptor end of tRNA(Tyr). The protein is Tyrosine--tRNA ligase of Campylobacter jejuni (strain RM1221).